The sequence spans 127 residues: Glycine cleavage system H protein (127 aa).

The Lipoyl-binding domain occupies 22–104; that stretch reads AVVIGITHFA…YEGAWMVKVE (83 aa). Lysine 63 is subject to N6-lipoyllysine.

The protein belongs to the GcvH family. The glycine cleavage system is composed of four proteins: P, T, L and H. (R)-lipoate is required as a cofactor.

In terms of biological role, the glycine cleavage system catalyzes the degradation of glycine. The H protein shuttles the methylamine group of glycine from the P protein to the T protein. Is also involved in protein lipoylation via its role as an octanoyl/lipoyl carrier protein intermediate. This Bacillus mycoides (strain KBAB4) (Bacillus weihenstephanensis) protein is Glycine cleavage system H protein.